The following is a 469-amino-acid chain: UDP-N-acetylmuramoylalanine--D-glutamate ligase (469 aa).

ATP is bound at residue Gly123 to Thr129.

It belongs to the MurCDEF family.

It localises to the cytoplasm. The catalysed reaction is UDP-N-acetyl-alpha-D-muramoyl-L-alanine + D-glutamate + ATP = UDP-N-acetyl-alpha-D-muramoyl-L-alanyl-D-glutamate + ADP + phosphate + H(+). Its pathway is cell wall biogenesis; peptidoglycan biosynthesis. In terms of biological role, cell wall formation. Catalyzes the addition of glutamate to the nucleotide precursor UDP-N-acetylmuramoyl-L-alanine (UMA). The polypeptide is UDP-N-acetylmuramoylalanine--D-glutamate ligase (Phenylobacterium zucineum (strain HLK1)).